The chain runs to 271 residues: 3-methyl-2-oxobutanoate hydroxymethyltransferase (271 aa).

Mg(2+) contacts are provided by Asp-53 and Asp-92. 3-methyl-2-oxobutanoate contacts are provided by residues 53–54, Asp-92, and Lys-120; that span reads DS. Glu-122 contributes to the Mg(2+) binding site. The Proton acceptor role is filled by Glu-189.

The protein belongs to the PanB family. Homodecamer; pentamer of dimers. Mg(2+) is required as a cofactor.

Its subcellular location is the cytoplasm. The enzyme catalyses 3-methyl-2-oxobutanoate + (6R)-5,10-methylene-5,6,7,8-tetrahydrofolate + H2O = 2-dehydropantoate + (6S)-5,6,7,8-tetrahydrofolate. The protein operates within cofactor biosynthesis; (R)-pantothenate biosynthesis; (R)-pantoate from 3-methyl-2-oxobutanoate: step 1/2. Functionally, catalyzes the reversible reaction in which hydroxymethyl group from 5,10-methylenetetrahydrofolate is transferred onto alpha-ketoisovalerate to form ketopantoate. The chain is 3-methyl-2-oxobutanoate hydroxymethyltransferase from Paraburkholderia phymatum (strain DSM 17167 / CIP 108236 / LMG 21445 / STM815) (Burkholderia phymatum).